Here is a 441-residue protein sequence, read N- to C-terminus: Ribulose bisphosphate carboxylase large chain (441 aa).

Substrate contacts are provided by N89 and T139. Residue K141 is the Proton acceptor of the active site. Residue K143 coordinates substrate. 3 residues coordinate Mg(2+): K167, D169, and E170. Position 167 is an N6-carboxylysine (K167). H260 acts as the Proton acceptor in catalysis. R261, H293, and S345 together coordinate substrate.

Belongs to the RuBisCO large chain family. Type I subfamily. Heterohexadecamer of 8 large chains and 8 small chains; disulfide-linked. The disulfide link is formed within the large subunit homodimers. Mg(2+) serves as cofactor. In terms of processing, the disulfide bond which can form in the large chain dimeric partners within the hexadecamer appears to be associated with oxidative stress and protein turnover.

Its subcellular location is the plastid. The protein localises to the chloroplast. It catalyses the reaction 2 (2R)-3-phosphoglycerate + 2 H(+) = D-ribulose 1,5-bisphosphate + CO2 + H2O. It carries out the reaction D-ribulose 1,5-bisphosphate + O2 = 2-phosphoglycolate + (2R)-3-phosphoglycerate + 2 H(+). Its function is as follows. RuBisCO catalyzes two reactions: the carboxylation of D-ribulose 1,5-bisphosphate, the primary event in carbon dioxide fixation, as well as the oxidative fragmentation of the pentose substrate in the photorespiration process. Both reactions occur simultaneously and in competition at the same active site. This chain is Ribulose bisphosphate carboxylase large chain, found in Viola sororia (Woolly blue violet).